We begin with the raw amino-acid sequence, 979 residues long: Probable serine/threonine-protein kinase iksA (979 aa).

N-linked (GlcNAc...) asparagine glycans are attached at residues Asn32, Asn110, Asn120, Asn121, Asn147, Asn155, Asn161, Asn220, Asn231, and Asn243. Positions 207–245 (SKSGVNNNNNNNNNDSTTTNNNNNNNTTPPQQQQQQNSS) are disordered. Residues 212 to 244 (NNNNNNNNNDSTTTNNNNNNNTTPPQQQQQQNS) show a composition bias toward low complexity. The 308-residue stretch at 261 to 568 (FKEDIKIGSG…ISQILSTHFI (308 aa)) folds into the Protein kinase domain. ATP is bound by residues 267–275 (IGSGGFGSV) and Lys293. The active-site Proton acceptor is the Asp397. Residues Asn592, Asn597, Asn615, Asn645, Asn646, Asn663, and Asn699 are each glycosylated (N-linked (GlcNAc...) asparagine). Positions 593-602 (TSVHNTTAST) are enriched in polar residues. Positions 593-666 (TSVHNTTAST…LGNNNNNNTN (74 aa)) are disordered. A compositionally biased stretch (low complexity) spans 610-666 (SISTTNSTTSSSSSTATSSSLSSTTIATTSSSNAINNTTATTTTNSNLGNNNNNNTN). The span at 713-727 (NDDIIIDDDDDDDDS) shows a compositional bias: acidic residues. Positions 713 to 793 (NDDIIIDDDD…GNNGIRKALP (81 aa)) are disordered. Composition is skewed to low complexity over residues 728 to 737 (TNNNDTNNTD) and 753 to 773 (NNKK…SSNK). Asn731 and Asn734 each carry an N-linked (GlcNAc...) asparagine glycan. Residues 846-866 (FPSPILLYPLLLLSLIPILVV) traverse the membrane as a helical segment. Asn870 and Asn894 each carry an N-linked (GlcNAc...) asparagine glycan. Transmembrane regions (helical) follow at residues 912–932 (INTI…VLLP) and 956–976 (FPLL…IFIF).

This sequence belongs to the protein kinase superfamily. Ser/Thr protein kinase family.

The protein resides in the membrane. The enzyme catalyses L-seryl-[protein] + ATP = O-phospho-L-seryl-[protein] + ADP + H(+). It catalyses the reaction L-threonyl-[protein] + ATP = O-phospho-L-threonyl-[protein] + ADP + H(+). The sequence is that of Probable serine/threonine-protein kinase iksA (iksA) from Dictyostelium discoideum (Social amoeba).